The chain runs to 912 residues: Protein translocase subunit SecA (912 aa).

ATP contacts are provided by residues Gln87, 105-109, and Asp510; that span reads GEGKT. The tract at residues 854–912 is disordered; the sequence is KLRHEQASAAQAEGEGDDGQQGQQATPETFVRQERKVGRNEPCPCGSGKKYKQCCGKVS. Zn(2+) contacts are provided by Cys896, Cys898, Cys907, and Cys908.

Belongs to the SecA family. In terms of assembly, monomer and homodimer. Part of the essential Sec protein translocation apparatus which comprises SecA, SecYEG and auxiliary proteins SecDF-YajC and YidC. It depends on Zn(2+) as a cofactor.

Its subcellular location is the cell inner membrane. The protein resides in the cytoplasm. It catalyses the reaction ATP + H2O + cellular proteinSide 1 = ADP + phosphate + cellular proteinSide 2.. Its function is as follows. Part of the Sec protein translocase complex. Interacts with the SecYEG preprotein conducting channel. Has a central role in coupling the hydrolysis of ATP to the transfer of proteins into and across the cell membrane, serving both as a receptor for the preprotein-SecB complex and as an ATP-driven molecular motor driving the stepwise translocation of polypeptide chains across the membrane. This is Protein translocase subunit SecA from Marinobacter nauticus (strain ATCC 700491 / DSM 11845 / VT8) (Marinobacter aquaeolei).